A 254-amino-acid polypeptide reads, in one-letter code: MAIDSKPHDDLQLFKTNLHPCGYWPDRWASDLVMDPNDPRLGAIYPQTLAWGFRRSGNLLYRPHCEHCNACVPVRVNVNAFVPNRSQRRCLARNATLVTRIVPAERNAEQLSLYRRYLHQRHPDGGMDGHGAIEFDQFLIGPWGYGRFMEIREPATNGTPGQLLAVAVTDLTHQALSAVYTFYEPNAAARGLGTLAILHQIHWAQREQRPYLYLGYWIKDHFKMDYKRRFQKLEIYDGYRWRPFSTTYPTTHTL.

The protein belongs to the R-transferase family. Bpt subfamily.

It localises to the cytoplasm. The catalysed reaction is N-terminal L-glutamyl-[protein] + L-leucyl-tRNA(Leu) = N-terminal L-leucyl-L-glutamyl-[protein] + tRNA(Leu) + H(+). It carries out the reaction N-terminal L-aspartyl-[protein] + L-leucyl-tRNA(Leu) = N-terminal L-leucyl-L-aspartyl-[protein] + tRNA(Leu) + H(+). Its function is as follows. Functions in the N-end rule pathway of protein degradation where it conjugates Leu from its aminoacyl-tRNA to the N-termini of proteins containing an N-terminal aspartate or glutamate. The polypeptide is Aspartate/glutamate leucyltransferase (Xylella fastidiosa (strain M23)).